The sequence spans 165 residues: MALGLEDKKAIVAEVNEAAKGALSAVVADSRGVTVANMTGLRKAAREAGVYIRVVRNTLVKRAVAGTDFECLSDTFTGPTLIAFSTEHPGAAARLLKDFAKAQEKFEIKAAAFEGELIPAENIDRLAKLPTYEEALAQFMMTLKEASAGKFVRTLAALRDQKEAA.

Belongs to the universal ribosomal protein uL10 family. As to quaternary structure, part of the ribosomal stalk of the 50S ribosomal subunit. The N-terminus interacts with L11 and the large rRNA to form the base of the stalk. The C-terminus forms an elongated spine to which L12 dimers bind in a sequential fashion forming a multimeric L10(L12)X complex.

In terms of biological role, forms part of the ribosomal stalk, playing a central role in the interaction of the ribosome with GTP-bound translation factors. The protein is Large ribosomal subunit protein uL10 of Shewanella halifaxensis (strain HAW-EB4).